Reading from the N-terminus, the 116-residue chain is Mercuric transport protein MerT (116 aa).

The next 2 membrane-spanning stretches (helical) occupy residues 16–36 (LAAILASACCLGPLVLIALGF) and 46–66 (VLEPYRPIFIGVALVALFFAW). Hg(2+) is bound by residues cysteine 24 and cysteine 25. The Hg(2+) site is built by cysteine 76 and cysteine 82. A helical membrane pass occupies residues 94–114 (IFWGVAVLVLVALGFPYVVPF).

It belongs to the MerT family.

It is found in the cell inner membrane. Its function is as follows. Involved in mercury resistance. Probably transfers a mercuric ion from the periplasmic Hg(2+)-binding protein MerP to the cytoplasmic mercuric reductase MerA. This chain is Mercuric transport protein MerT, found in Pseudomonas fluorescens.